Consider the following 334-residue polypeptide: D-fructose 1,6-bisphosphatase class 2/sedoheptulose 1,7-bisphosphatase (334 aa).

Mn(2+) is bound by residues Asp33, Glu57, Asp85, and Glu88. Substrate-binding positions include 88 to 90, Tyr119, 164 to 166, and 186 to 188; these read EGT, RAR, and DGD. Glu213 serves as a coordination point for Mn(2+).

This sequence belongs to the FBPase class 2 family. As to quaternary structure, homotetramer. It depends on Mn(2+) as a cofactor.

The catalysed reaction is beta-D-fructose 1,6-bisphosphate + H2O = beta-D-fructose 6-phosphate + phosphate. It carries out the reaction D-sedoheptulose 1,7-bisphosphate + H2O = D-sedoheptulose 7-phosphate + phosphate. Its pathway is carbohydrate biosynthesis; Calvin cycle. Functionally, catalyzes the hydrolysis of fructose 1,6-bisphosphate (Fru 1,6-P2) and sedoheptulose 1,7-bisphosphate (Sed 1,7-P2) to fructose 6-phosphate and sedoheptulose 7-phosphate, respectively. This chain is D-fructose 1,6-bisphosphatase class 2/sedoheptulose 1,7-bisphosphatase, found in Prochlorococcus marinus (strain NATL1A).